The sequence spans 280 residues: uncharacterized protein (280 aa).

The N-terminal stretch at 1 to 21 is a signal peptide; that stretch reads MRPAIKVGLSTASVYPLRAEA.

It to M.leprae ML2432 and S.coelicolor SCO3347.

This is an uncharacterized protein from Mycobacterium tuberculosis (strain CDC 1551 / Oshkosh).